The chain runs to 400 residues: Phosphoglycerate kinase (400 aa).

Residues 21-23, arginine 36, 59-62, arginine 119, and arginine 160 contribute to the substrate site; these read DFN and HLGR. ATP is bound by residues lysine 211, glutamate 329, and 356 to 359; that span reads GGDS.

The protein belongs to the phosphoglycerate kinase family. As to quaternary structure, monomer.

It localises to the cytoplasm. The catalysed reaction is (2R)-3-phosphoglycerate + ATP = (2R)-3-phospho-glyceroyl phosphate + ADP. The protein operates within carbohydrate degradation; glycolysis; pyruvate from D-glyceraldehyde 3-phosphate: step 2/5. This Lactiplantibacillus plantarum (strain ATCC BAA-793 / NCIMB 8826 / WCFS1) (Lactobacillus plantarum) protein is Phosphoglycerate kinase.